We begin with the raw amino-acid sequence, 542 residues long: Phosphoenolpyruvate carboxykinase (ATP) (542 aa).

Arg-67, Tyr-208, and Lys-214 together coordinate substrate. ATP contacts are provided by residues Lys-214, His-233, and 249–257 (GLSGTGKTT). Mn(2+) is bound by residues Lys-214 and His-233. Mn(2+) is bound at residue Asp-270. Residues Glu-298, Arg-334, 450–451 (RI), and Thr-456 each bind ATP. Arg-334 contributes to the substrate binding site.

It belongs to the phosphoenolpyruvate carboxykinase (ATP) family. In terms of assembly, monomer. Requires Mn(2+) as cofactor.

It localises to the cytoplasm. It catalyses the reaction oxaloacetate + ATP = phosphoenolpyruvate + ADP + CO2. Its pathway is carbohydrate biosynthesis; gluconeogenesis. Its function is as follows. Involved in the gluconeogenesis. Catalyzes the conversion of oxaloacetate (OAA) to phosphoenolpyruvate (PEP) through direct phosphoryl transfer between the nucleoside triphosphate and OAA. The protein is Phosphoenolpyruvate carboxykinase (ATP) of Vibrio vulnificus (strain CMCP6).